The following is a 239-amino-acid chain: SH3 domain-binding glutamic acid-rich protein (239 aa).

Positions 124–130 (NGIPLPP) match the SH3-binding motif. The interval 159 to 239 (GLAPPPDSKG…GEEPGEDEDS (81 aa)) is disordered. Basic and acidic residues predominate over residues 167–185 (KGSEKAEEGGETEAQKEGS). Over residues 198 to 239 (NEEEGETATEETEEIAMEGAEGEAEEEEETAEGEEPGEDEDS) the composition is skewed to acidic residues.

This sequence belongs to the SH3BGR family. In terms of tissue distribution, expressed in heart and skeletal muscle.

In Homo sapiens (Human), this protein is SH3 domain-binding glutamic acid-rich protein (SH3BGR).